We begin with the raw amino-acid sequence, 227 residues long: Enolase-phosphatase E1 (227 aa).

Residues Asp-11 and Glu-13 each contribute to the Mg(2+) site. Substrate-binding positions include 118–119 and Lys-161; that span reads SS. Asp-186 contacts Mg(2+).

It belongs to the HAD-like hydrolase superfamily. MasA/MtnC family. In terms of assembly, monomer. The cofactor is Mg(2+).

The protein resides in the cytoplasm. Its subcellular location is the nucleus. It carries out the reaction 5-methylsulfanyl-2,3-dioxopentyl phosphate + H2O = 1,2-dihydroxy-5-(methylsulfanyl)pent-1-en-3-one + phosphate. The protein operates within amino-acid biosynthesis; L-methionine biosynthesis via salvage pathway; L-methionine from S-methyl-5-thio-alpha-D-ribose 1-phosphate: step 3/6. Its pathway is amino-acid biosynthesis; L-methionine biosynthesis via salvage pathway; L-methionine from S-methyl-5-thio-alpha-D-ribose 1-phosphate: step 4/6. Its function is as follows. Bifunctional enzyme that catalyzes the enolization of 2,3-diketo-5-methylthiopentyl-1-phosphate (DK-MTP-1-P) into the intermediate 2-hydroxy-3-keto-5-methylthiopentenyl-1-phosphate (HK-MTPenyl-1-P), which is then dephosphorylated to form the acireductone 1,2-dihydroxy-3-keto-5-methylthiopentene (DHK-MTPene). This chain is Enolase-phosphatase E1, found in Saccharomyces cerevisiae (strain YJM789) (Baker's yeast).